Reading from the N-terminus, the 879-residue chain is Phosphoenolpyruvate carboxylase (879 aa).

Active-site residues include histidine 138 and lysine 545.

The protein belongs to the PEPCase type 1 family. Mg(2+) serves as cofactor.

It catalyses the reaction oxaloacetate + phosphate = phosphoenolpyruvate + hydrogencarbonate. In terms of biological role, forms oxaloacetate, a four-carbon dicarboxylic acid source for the tricarboxylic acid cycle. This chain is Phosphoenolpyruvate carboxylase, found in Histophilus somni (strain 2336) (Haemophilus somnus).